The chain runs to 446 residues: Tubulin gamma chain (446 aa).

Residue 142-148 (AGGTGSG) coordinates GTP.

Belongs to the tubulin family. Interacts with mto1. Interacts with mto2.

Its subcellular location is the cytoplasm. It localises to the cytoskeleton. The protein resides in the microtubule organizing center. The protein localises to the spindle pole body. Functionally, tubulin is the major constituent of microtubules. The gamma chain is found at microtubule organizing centers (MTOC) such as the spindle poles or the centrosome, suggesting that it is involved in the minus-end nucleation of microtubule assembly. The sequence is that of Tubulin gamma chain from Schizosaccharomyces pombe (strain 972 / ATCC 24843) (Fission yeast).